The following is a 158-amino-acid chain: Small ribosomal subunit protein uS9 (158 aa).

This sequence belongs to the universal ribosomal protein uS9 family.

The protein is Small ribosomal subunit protein uS9 of Brucella canis (strain ATCC 23365 / NCTC 10854 / RM-666).